The primary structure comprises 267 residues: Ribosomal RNA large subunit methyltransferase E (267 aa).

Residues Gly-52, Phe-54, Asp-72, Asp-90, and Asp-114 each coordinate S-adenosyl-L-methionine. Catalysis depends on Lys-154, which acts as the Proton acceptor. Residues 212–252 (EAPRAPAPPEQAAAPEEATAPATRAARQKPAPAKKPAAAKR) are compositionally biased toward low complexity. The tract at residues 212-267 (EAPRAPAPPEQAAAPEEATAPATRAARQKPAPAKKPAAAKRPAARKRAAKKPARRA) is disordered. The span at 253–267 (PAARKRAAKKPARRA) shows a compositional bias: basic residues.

The protein belongs to the class I-like SAM-binding methyltransferase superfamily. RNA methyltransferase RlmE family.

It localises to the cytoplasm. The enzyme catalyses uridine(2552) in 23S rRNA + S-adenosyl-L-methionine = 2'-O-methyluridine(2552) in 23S rRNA + S-adenosyl-L-homocysteine + H(+). Its function is as follows. Specifically methylates the uridine in position 2552 of 23S rRNA at the 2'-O position of the ribose in the fully assembled 50S ribosomal subunit. The protein is Ribosomal RNA large subunit methyltransferase E of Anaeromyxobacter dehalogenans (strain 2CP-C).